We begin with the raw amino-acid sequence, 498 residues long: Glycerol kinase (498 aa).

Threonine 11 provides a ligand contact to ADP. ATP-binding residues include threonine 11, threonine 12, and serine 13. Residue threonine 11 participates in sn-glycerol 3-phosphate binding. Arginine 15 provides a ligand contact to ADP. Residues arginine 81, glutamate 82, tyrosine 133, and aspartate 242 each contribute to the sn-glycerol 3-phosphate site. Glycerol contacts are provided by arginine 81, glutamate 82, tyrosine 133, aspartate 242, and glutamine 243. The ADP site is built by threonine 264 and glycine 307. ATP-binding residues include threonine 264, glycine 307, glutamine 311, and glycine 411. Residue glycine 411 coordinates ADP.

Belongs to the FGGY kinase family.

The enzyme catalyses glycerol + ATP = sn-glycerol 3-phosphate + ADP + H(+). The protein operates within polyol metabolism; glycerol degradation via glycerol kinase pathway; sn-glycerol 3-phosphate from glycerol: step 1/1. Its activity is regulated as follows. Inhibited by fructose 1,6-bisphosphate (FBP). In terms of biological role, key enzyme in the regulation of glycerol uptake and metabolism. Catalyzes the phosphorylation of glycerol to yield sn-glycerol 3-phosphate. The sequence is that of Glycerol kinase from Afipia carboxidovorans (strain ATCC 49405 / DSM 1227 / KCTC 32145 / OM5) (Oligotropha carboxidovorans).